We begin with the raw amino-acid sequence, 216 residues long: Octanoyltransferase (216 aa).

Residues 33 to 216 (AQTADELWIV…AEKLTRHLSG (184 aa)) enclose the BPL/LPL catalytic domain. Substrate is bound by residues 72-79 (RGGEVTYH), 148-150 (ALG), and 162-164 (GVS). Catalysis depends on C180, which acts as the Acyl-thioester intermediate.

The protein belongs to the LipB family.

The protein resides in the cytoplasm. It catalyses the reaction octanoyl-[ACP] + L-lysyl-[protein] = N(6)-octanoyl-L-lysyl-[protein] + holo-[ACP] + H(+). The protein operates within protein modification; protein lipoylation via endogenous pathway; protein N(6)-(lipoyl)lysine from octanoyl-[acyl-carrier-protein]: step 1/2. Functionally, catalyzes the transfer of endogenously produced octanoic acid from octanoyl-acyl-carrier-protein onto the lipoyl domains of lipoate-dependent enzymes. Lipoyl-ACP can also act as a substrate although octanoyl-ACP is likely to be the physiological substrate. The protein is Octanoyltransferase of Herminiimonas arsenicoxydans.